A 245-amino-acid chain; its full sequence is Caffeoyl-CoA O-methyltransferase (245 aa).

K19 is a substrate binding site. S-adenosyl-L-methionine is bound by residues T61, E83, 85–86 (GV), S91, D109, and A138. Residue D161 participates in substrate binding. D161 is an a divalent metal cation binding site. D163 is a binding site for S-adenosyl-L-methionine. D187 and N188 together coordinate a divalent metal cation. N192 is a substrate binding site.

It belongs to the class I-like SAM-binding methyltransferase superfamily. Cation-dependent O-methyltransferase family. CCoAMT subfamily. Requires a divalent metal cation as cofactor.

The catalysed reaction is (E)-caffeoyl-CoA + S-adenosyl-L-methionine = (E)-feruloyl-CoA + S-adenosyl-L-homocysteine + H(+). The protein operates within aromatic compound metabolism; phenylpropanoid biosynthesis. Its function is as follows. Methylates caffeoyl-CoA to feruloyl-CoA and 5-hydroxyferuloyl-CoA to sinapoyl-CoA. Plays a role in the synthesis of feruloylated polysaccharides. Involved in the reinforcement of the plant cell wall. Also involved in the responding to wounding or pathogen challenge by the increased formation of cell wall-bound ferulic acid polymers. This Zinnia elegans (Garden zinnia) protein is Caffeoyl-CoA O-methyltransferase (CCOAOMT).